Here is a 96-residue protein sequence, read N- to C-terminus: Putative protein p29 (96 aa).

In Acyrthosiphon pisum secondary endosymbiont phage 1 (Bacteriophage APSE-1), this protein is Putative protein p29 (29).